The following is an 850-amino-acid chain: Mitogen-activated protein kinase kinase kinase 11 (850 aa).

Ser-11 bears the Phosphoserine mark. Positions 16 to 35 (WNGSGSGGGGGTGGVRPEGS) are disordered. Positions 17–31 (NGSGSGGGGGTGGVR) are enriched in gly residues. A Phosphoserine modification is found at Ser-35. An SH3 domain is found at 42–106 (YANPVWTALF…PSNYVSRGGG (65 aa)). A Protein kinase domain is found at 118–380 (LRLEEVIGIG…ASILQQLEAL (263 aa)). ATP-binding positions include 124 to 132 (IGIGGFGKV) and Lys-145. The Proton acceptor role is filled by Asp-242. Position 278 is a phosphothreonine; by autocatalysis (Thr-278). Residue Ser-282 is modified to Phosphoserine; by autocatalysis and MAP4K1. Phosphoserine is present on Ser-395. Leucine-zipper stretches follow at residues 404 to 425 (IQGL…EEEL) and 439 to 460 (LRRR…ELTL). 2 positions are modified to phosphoserine: Ser-508 and Ser-525. The segment at 535-644 (QLEPTESGQT…SSGTPKLIQR (110 aa)) is disordered. Polar residues predominate over residues 538–547 (PTESGQTWGR). Phosphoserine is present on residues Ser-549, Ser-556, and Ser-557. A compositionally biased stretch (basic and acidic residues) spans 551–563 (RRLEDSSNGERRA). Residues 598 to 610 (SSPLGSPSTPPAL) show a composition bias toward low complexity. Residue Ser-655 is modified to Phosphoserine. The interval 657-850 (GLGRDLQPPG…QAPWAPEAGP (194 aa)) is disordered. The segment covering 677–693 (TAPPPAQMPSPCPPELP) has biased composition (pro residues). A compositionally biased stretch (polar residues) spans 700 to 711 (LSQTTPDAHSSP). Ser-709 is subject to Phosphoserine. Residue Thr-712 is modified to Phosphothreonine. Phosphoserine is present on residues Ser-728, Ser-731, Ser-743, Ser-751, Ser-761, Ser-773, Ser-792, Ser-796, and Ser-818. A compositionally biased stretch (low complexity) spans 763-776 (PLGLISRPRPSPLR). Positions 790 to 802 (RPSPLPSPQPAPR) are enriched in pro residues. Low complexity predominate over residues 803–819 (RAPWTLFPDSDPFWDSP).

This sequence belongs to the protein kinase superfamily. STE Ser/Thr protein kinase family. MAP kinase kinase kinase subfamily. As to quaternary structure, homodimer; undergoes dimerization during activation. Interacts with MAP2K4/MKK4 and MAP2K7/MKK7. Found in a complex with SH3RF1, RAC1, MAP2K7/MKK7, MAPK8IP1/JIP1 and MAPK8/JNK1. Mg(2+) is required as a cofactor. Post-translationally, autophosphorylation on serine and threonine residues within the activation loop plays a role in enzyme activation. Thr-278 is likely to be the main autophosphorylation site. Phosphorylation of Ser-556 and Ser-557 is induced by CDC42.

It localises to the cytoplasm. The protein resides in the cytoskeleton. Its subcellular location is the microtubule organizing center. The protein localises to the centrosome. It carries out the reaction L-seryl-[protein] + ATP = O-phospho-L-seryl-[protein] + ADP + H(+). The enzyme catalyses L-threonyl-[protein] + ATP = O-phospho-L-threonyl-[protein] + ADP + H(+). With respect to regulation, homodimerization via the leucine zipper domains is required for autophosphorylation and subsequent activation. Functionally, activates the JUN N-terminal pathway. Required for serum-stimulated cell proliferation and for mitogen and cytokine activation of MAPK14 (p38), MAPK3 (ERK) and MAPK8 (JNK1) through phosphorylation and activation of MAP2K4/MKK4 and MAP2K7/MKK7. Plays a role in mitogen-stimulated phosphorylation and activation of BRAF, but does not phosphorylate BRAF directly. Influences microtubule organization during the cell cycle. The chain is Mitogen-activated protein kinase kinase kinase 11 (Map3k11) from Mus musculus (Mouse).